We begin with the raw amino-acid sequence, 451 residues long: Ammonium transporter Rh type B (451 aa).

Residues 1 to 11 lie on the Cytoplasmic side of the membrane; the sequence is MADVSTSMRLK. Residues 12-32 traverse the membrane as a helical segment; the sequence is LPVVCFILEIILIILFGALVQ. Residues 33-63 are Extracellular-facing; it reads YDYETDAKEWHNQSHNDYENDFYFRYPSFQD. N44 carries an N-linked (GlcNAc...) asparagine glycan. The chain crosses the membrane as a helical span at residues 64-84; it reads VHVMIFIGFGFLMTFLQKYGF. Over 85–87 the chain is Cytoplasmic; sequence GSV. A helical membrane pass occupies residues 88-108; it reads GFNFLIAAFSLQWATLMQGFF. Over 109-121 the chain is Extracellular; it reads HGMHGGKIHVGVE. A helical membrane pass occupies residues 122-142; that stretch reads SMINADFCTGSVLISFGAVLG. Residues 143–151 are Cytoplasmic-facing; the sequence is KTSPIQLLT. A helical transmembrane segment spans residues 152–172; it reads MAMFEVTLFAVNEFILLSLLG. Residues 173–176 lie on the Extracellular side of the membrane; sequence TRDA. Residues 177–197 form a helical membrane-spanning segment; it reads GGSMTIHTFGAYFGLMVTRIL. Over 198-216 the chain is Cytoplasmic; it reads YRPHLDKSKHRNSSVYHSD. The helical transmembrane segment at 217-237 threads the bilayer; that stretch reads LFAMIGTIYLWMFWPSFNSAI. The Extracellular portion of the chain corresponds to 238–247; it reads TAHGDDQHRT. The chain crosses the membrane as a helical span at residues 248–270; the sequence is ALNTYYSLAACTLATYGMSAVTS. Topologically, residues 271-274 are cytoplasmic; the sequence is HDGK. The chain crosses the membrane as a helical span at residues 275–295; that stretch reads LDMVHIQNAALAGGVAVGTAG. At 296 to 298 the chain is on the extracellular side; sequence EMM. A helical transmembrane segment spans residues 299–319; the sequence is LTPFGSMIVGFLAGIISVLGF. The Cytoplasmic portion of the chain corresponds to 320–340; it reads KFLSPILESKLKIQDTCGVHN. Residues 341–361 form a helical membrane-spanning segment; it reads LHGMPGVLGAIVGAVTAALAT. Topologically, residues 362–390 are extracellular; sequence MDVYGKGMEDVFPAVADGSIDASKQGGVQ. The chain crosses the membrane as a helical span at residues 391 to 411; it reads ALSLAITLGIALLGGLIVVFG. Residues 412–451 are Cytoplasmic-facing; that stretch reads TPPDTLCFEDGVYWEVPESEAPHEAQLTTVRTEETEKLSS.

Belongs to the ammonium transporter (TC 2.A.49) family. Rh subfamily.

The protein resides in the basolateral cell membrane. The protein localises to the cytoplasmic vesicle membrane. In terms of biological role, functions as an ammonia transporter. May play a role in the elimination of ammonia in the gill. This Tetraodon nigroviridis (Spotted green pufferfish) protein is Ammonium transporter Rh type B (rhbg).